Consider the following 461-residue polypeptide: Cyclic 2,3-diphosphoglycerate synthetase (461 aa).

It belongs to the cyclic 2,3-diphosphoglycerate synthetase family.

Its subcellular location is the cytoplasm. It carries out the reaction (2R)-2,3-bisphosphoglycerate + ATP + H(+) = cyclic (2R)-2,3-bisphosphoglycerate + ADP + phosphate. Catalyzes the formation of cyclic 2,3-diphosphoglycerate (cDPG) by formation of an intramolecular phosphoanhydride bond at the expense of ATP. This Methanosphaera stadtmanae (strain ATCC 43021 / DSM 3091 / JCM 11832 / MCB-3) protein is Cyclic 2,3-diphosphoglycerate synthetase.